A 629-amino-acid polypeptide reads, in one-letter code: Dapper homolog 3 (629 aa).

Ser-6 is modified (phosphoserine). 2 disordered regions span residues 50–76 (PGMGGAEAEDEEDADEDEDAAAARRAA) and 105–574 (GGLE…GGLV). The segment covering 56 to 69 (EAEDEEDADEDEDA) has biased composition (acidic residues). Residues 63–87 (ADEDEDAAAARRAAAALEEQLEALP) are a coiled coil. Positions 105–150 (GGLEQESGRSSGFYEDPSSTGGPDSPPSTFCGDSGFSGSSSYGRLG) are enriched in low complexity. Residues Ser-165 and Ser-239 each carry the phosphoserine modification. Position 258 is an omega-N-methylarginine (Arg-258). Positions 301–311 (PAREPSLERVG) are enriched in basic and acidic residues. A compositionally biased stretch (low complexity) spans 316 to 335 (SPAALSRAWASSWESEAAPE). Residues 336-348 (PAAPPAAPSPPDS) are compositionally biased toward pro residues. 2 positions are modified to phosphoserine: Ser-426 and Ser-478. The segment covering 525 to 535 (SAGRLGPLGRR) has biased composition (low complexity). Positions 536 to 546 (GPAGGVGGGYG) are enriched in gly residues. Residues 547-568 (ESESSASEGESPAFSSASSDSD) are compositionally biased toward low complexity. A PDZ-binding motif is present at residues 626 to 629 (MTTV).

This sequence belongs to the dapper family. In terms of assembly, can form homodimers and heterodimers with DACT1 or DACT3. Interacts with CSNK1D, PKA catalytic subunit, PKC-type kinase, DVL1, DVL3, VANGL1, VANGL2 and CTNND1. Interacts with DVL2.

Its function is as follows. May be involved in regulation of intracellular signaling pathways during development. Specifically thought to play a role in canonical and/or non-canonical Wnt signaling pathways through interaction with DSH (Dishevelled) family proteins. The polypeptide is Dapper homolog 3 (DACT3) (Homo sapiens (Human)).